Consider the following 30-residue polypeptide: Thrombin-like enzyme LmrSP-2 (30 aa).

This sequence belongs to the peptidase S1 family. Snake venom subfamily. Expressed by the venom gland.

The protein resides in the secreted. Thrombin-like snake venom serine protease that cleaves alpha-chain of fibrinogen (FGA) releases only fibrinopeptide A. Shows coagulant, esterase and amidase activities. This Lachesis muta rhombeata (Bushmaster) protein is Thrombin-like enzyme LmrSP-2.